A 166-amino-acid polypeptide reads, in one-letter code: Ribosome maturation factor RimM (166 aa).

The region spanning 94–166 is the PRC barrel domain; the sequence is EGEYYLGKLI…IELKVLDLLK (73 aa).

Belongs to the RimM family. In terms of assembly, binds ribosomal protein uS19.

It is found in the cytoplasm. An accessory protein needed during the final step in the assembly of 30S ribosomal subunit, possibly for assembly of the head region. Essential for efficient processing of 16S rRNA. May be needed both before and after RbfA during the maturation of 16S rRNA. It has affinity for free ribosomal 30S subunits but not for 70S ribosomes. The sequence is that of Ribosome maturation factor RimM from Borreliella burgdorferi (strain ATCC 35210 / DSM 4680 / CIP 102532 / B31) (Borrelia burgdorferi).